The chain runs to 706 residues: Fatty acid oxidation complex subunit alpha (706 aa).

An enoyl-CoA hydratase region spans residues 1 to 188 (MEKTFNLTRR…KMGLVNDVVP (188 aa)). A 3-hydroxyacyl-CoA dehydrogenase region spans residues 308 to 706 (RKVKKAVILG…TMARENVSFF (399 aa)).

In the N-terminal section; belongs to the enoyl-CoA hydratase/isomerase family. The protein in the central section; belongs to the 3-hydroxyacyl-CoA dehydrogenase family. In terms of assembly, heterotetramer of two alpha chains (FadJ) and two beta chains (FadI).

It is found in the cytoplasm. It carries out the reaction a (3S)-3-hydroxyacyl-CoA = a (2E)-enoyl-CoA + H2O. The enzyme catalyses a 4-saturated-(3S)-3-hydroxyacyl-CoA = a (3E)-enoyl-CoA + H2O. It catalyses the reaction a (3S)-3-hydroxyacyl-CoA + NAD(+) = a 3-oxoacyl-CoA + NADH + H(+). The catalysed reaction is (3S)-3-hydroxybutanoyl-CoA = (3R)-3-hydroxybutanoyl-CoA. The protein operates within lipid metabolism; fatty acid beta-oxidation. Its function is as follows. Catalyzes the formation of a hydroxyacyl-CoA by addition of water on enoyl-CoA. Also exhibits 3-hydroxyacyl-CoA epimerase and 3-hydroxyacyl-CoA dehydrogenase activities. The protein is Fatty acid oxidation complex subunit alpha of Shewanella putrefaciens (strain CN-32 / ATCC BAA-453).